We begin with the raw amino-acid sequence, 302 residues long: Ornithine carbamoyltransferase (302 aa).

Carbamoyl phosphate is bound by residues 47 to 50 (STRT), Gln74, Arg98, and 125 to 128 (HPCQ). Residues Asn156, Asp220, and 224-225 (SM) contribute to the L-ornithine site. Residues 260–261 (CL) and Arg288 contribute to the carbamoyl phosphate site.

This sequence belongs to the aspartate/ornithine carbamoyltransferase superfamily. OTCase family.

It is found in the cytoplasm. It catalyses the reaction carbamoyl phosphate + L-ornithine = L-citrulline + phosphate + H(+). It participates in amino-acid biosynthesis; L-arginine biosynthesis; L-arginine from L-ornithine and carbamoyl phosphate: step 1/3. Its function is as follows. Reversibly catalyzes the transfer of the carbamoyl group from carbamoyl phosphate (CP) to the N(epsilon) atom of ornithine (ORN) to produce L-citrulline. The chain is Ornithine carbamoyltransferase from Methanosphaera stadtmanae (strain ATCC 43021 / DSM 3091 / JCM 11832 / MCB-3).